Consider the following 160-residue polypeptide: Large ribosomal subunit protein bL9 (160 aa).

It belongs to the bacterial ribosomal protein bL9 family.

Binds to the 23S rRNA. This Neorickettsia sennetsu (strain ATCC VR-367 / Miyayama) (Ehrlichia sennetsu) protein is Large ribosomal subunit protein bL9.